The following is a 688-amino-acid chain: Elongation factor G (688 aa).

The tr-type G domain occupies 8-282 (INFRNFGIMA…AVVDFLPSPV (275 aa)). Residues 17–24 (AHIDAGKT), 81–85 (DTPGH), and 135–138 (NKMD) each bind GTP.

This sequence belongs to the TRAFAC class translation factor GTPase superfamily. Classic translation factor GTPase family. EF-G/EF-2 subfamily.

The protein localises to the cytoplasm. In terms of biological role, catalyzes the GTP-dependent ribosomal translocation step during translation elongation. During this step, the ribosome changes from the pre-translocational (PRE) to the post-translocational (POST) state as the newly formed A-site-bound peptidyl-tRNA and P-site-bound deacylated tRNA move to the P and E sites, respectively. Catalyzes the coordinated movement of the two tRNA molecules, the mRNA and conformational changes in the ribosome. The chain is Elongation factor G (fusA) from Mycoplasma pneumoniae (strain ATCC 29342 / M129 / Subtype 1) (Mycoplasmoides pneumoniae).